Consider the following 112-residue polypeptide: Ig kappa chain V-II region MOPC 167 (112 aa).

The framework-1 stretch occupies residues 1–23 (DIVITQDELSNPVTSGESVSISC). C23 and C93 are disulfide-bonded. Residues 24-39 (RSSKSLLYKDGKTYLN) form a complementarity-determining-1 region. Positions 40-54 (WFLQRPGQSPQLLIS) are framework-2. A complementarity-determining-2 region spans residues 55–61 (LMSTRAS). The interval 62–93 (GVSDRFSGSGSRTDFTLEISRVKAEDVGVYYC) is framework-3. The tract at residues 94–102 (QQLVEYPLT) is complementarity-determining-3. Residues 103–112 (FGAGTKLELK) are framework-4.

The chain is Ig kappa chain V-II region MOPC 167 from Mus musculus (Mouse).